The primary structure comprises 425 residues: Serine hydroxymethyltransferase (425 aa).

(6S)-5,6,7,8-tetrahydrofolate-binding positions include Leu124 and 128–130 (GHL). Lys233 bears the N6-(pyridoxal phosphate)lysine mark.

Belongs to the SHMT family. Homodimer. The cofactor is pyridoxal 5'-phosphate.

It localises to the cytoplasm. The enzyme catalyses (6R)-5,10-methylene-5,6,7,8-tetrahydrofolate + glycine + H2O = (6S)-5,6,7,8-tetrahydrofolate + L-serine. It functions in the pathway one-carbon metabolism; tetrahydrofolate interconversion. Its pathway is amino-acid biosynthesis; glycine biosynthesis; glycine from L-serine: step 1/1. Its function is as follows. Catalyzes the reversible interconversion of serine and glycine with tetrahydrofolate (THF) serving as the one-carbon carrier. This reaction serves as the major source of one-carbon groups required for the biosynthesis of purines, thymidylate, methionine, and other important biomolecules. Also exhibits THF-independent aldolase activity toward beta-hydroxyamino acids, producing glycine and aldehydes, via a retro-aldol mechanism. This Clavibacter sepedonicus (Clavibacter michiganensis subsp. sepedonicus) protein is Serine hydroxymethyltransferase.